Consider the following 220-residue polypeptide: Pyrrolidone-carboxylate peptidase (220 aa).

Catalysis depends on residues Glu80, Cys143, and His167.

The protein belongs to the peptidase C15 family. Homotetramer.

It localises to the cytoplasm. It catalyses the reaction Release of an N-terminal pyroglutamyl group from a polypeptide, the second amino acid generally not being Pro.. In terms of biological role, removes 5-oxoproline from various penultimate amino acid residues except L-proline. This is Pyrrolidone-carboxylate peptidase (pcp) from Thermococcus litoralis (strain ATCC 51850 / DSM 5473 / JCM 8560 / NS-C).